Consider the following 313-residue polypeptide: UDP-glucose 4-epimerase (313 aa).

NAD(+) is bound by residues 11-12 (FI), 31-36 (DDLSSG), 56-57 (DI), and 77-81 (LAAQI). 2 residues coordinate substrate: Ser121 and Tyr146. Residues Tyr146 and Lys150 each contribute to the NAD(+) site. Residue Tyr146 is the Proton acceptor of the active site. Residues Asn175, 189 to 190 (VV), 204 to 206 (KIF), Arg213, and 271 to 274 (RLGD) contribute to the substrate site.

It belongs to the NAD(P)-dependent epimerase/dehydratase family. Homodimer. Requires NAD(+) as cofactor.

The catalysed reaction is UDP-alpha-D-glucose = UDP-alpha-D-galactose. It functions in the pathway carbohydrate metabolism; galactose metabolism. Its function is as follows. Involved in the metabolism of galactose. Catalyzes the conversion of UDP-galactose (UDP-Gal) to UDP-glucose (UDP-Glc) through a mechanism involving the transient reduction of NAD. This is UDP-glucose 4-epimerase from Mycolicibacterium smegmatis (strain ATCC 700084 / mc(2)155) (Mycobacterium smegmatis).